Reading from the N-terminus, the 413-residue chain is Paxillin homolog 1 (413 aa).

Basic and acidic residues predominate over residues 33 to 45 (HISDRRSQSRDDF). Residues 33–157 (HISDRRSQSR…PLHSDSMIGT (125 aa)) form a disordered region. Polar residues predominate over residues 49-69 (YDLQGNLNTQSVSNGNITTSP). The span at 73-92 (RSSEGKDYSKSQERIYENES) shows a compositional bias: basic and acidic residues. A compositionally biased stretch (polar residues) spans 118-143 (ASSSRKSLGPPSQAQSYSDVRSNGRS). LIM zinc-binding domains follow at residues 174-232 (GDCA…NQFS), 233-292 (PKCQ…LFAP), 293-350 (KCNG…ESRG), and 351-410 (SICS…TYAL).

This sequence belongs to the paxillin family. As to expression, isoform a: Expressed in all 95 body wall muscle cells as well as in the pharyngeal muscle cells (at protein level). Isoform c: Expressed in the body wall muscle cells and in the pharyngeal muscle cells.

Its subcellular location is the cell junction. It is found in the adherens junction. The protein localises to the cell membrane. The protein resides in the cytoplasm. It localises to the myofibril. Its subcellular location is the sarcomere. It is found in the m line. The protein localises to the cell projection. The protein resides in the podosome. Functionally, required for myofilament organization of the pharyngeal sarcomeres and for pharyngeal muscle contractions and hence for pharyngeal pumping. Together with lin-8, might be required for myofilament organization in the body wall muscles. The sequence is that of Paxillin homolog 1 (pxl-1) from Caenorhabditis elegans.